Reading from the N-terminus, the 766-residue chain is Ent-copalyl diphosphate synthase 3 (766 aa).

The N-terminal 30 residues, 1–30 (FRSTAAGRCLPVTCCVFPRHFRVSSSSILP), are a transit peptide targeting the chloroplast. Substrate is bound at residue K222. Residues D354 and D356 each coordinate Mg(2+). Residues 354–357 (DVDD) carry the DXDD motif motif. A substrate-binding site is contributed by K440.

This sequence belongs to the terpene synthase family. Tpsc subfamily. Mg(2+) serves as cofactor. As to expression, accumulates in leaves, and, at low levels, in germinating seeds.

The protein resides in the plastid. Its subcellular location is the chloroplast. The enzyme catalyses (2E,6E,10E)-geranylgeranyl diphosphate = ent-copalyl diphosphate. It functions in the pathway plant hormone biosynthesis; gibberellin biosynthesis. Its pathway is secondary metabolite biosynthesis; terpenoid biosynthesis. Functionally, involved in the biosynthesis of ent-kaurene diterpenoids natural products such as oridonin, miltiradiene, eriocalyxin B and nezukol, known to exhibit antitumor, anti-inflammatory and antibacterial activities, and in the production of gibberellins phytohormones. Catalyzes the conversion of (2E,6E,10E)-geranylgeranyl diphosphate (GGPP) to ent-copalyl diphosphate (ent-CPP). This Isodon eriocalyx (Plectranthus eriocalyx) protein is Ent-copalyl diphosphate synthase 3.